The following is a 211-amino-acid chain: Large ribosomal subunit protein uL3 (211 aa).

Residues 135–155 (THGNSLSHRAPGSIGQNQSPG) are disordered. Gln152 is subject to N5-methylglutamine.

It belongs to the universal ribosomal protein uL3 family. Part of the 50S ribosomal subunit. Forms a cluster with proteins L14 and L19. Post-translationally, methylated by PrmB.

Its function is as follows. One of the primary rRNA binding proteins, it binds directly near the 3'-end of the 23S rRNA, where it nucleates assembly of the 50S subunit. The polypeptide is Large ribosomal subunit protein uL3 (Pseudoalteromonas translucida (strain TAC 125)).